The sequence spans 489 residues: Aerolysin (489 aa).

The first 24 residues, 1-24 (MMNRIITANLANLASSLMLAQVLG), serve as a signal peptide directing secretion. 2 cysteine pairs are disulfide-bonded: Cys44/Cys100 and Cys184/Cys189. Positions 70–86 (WQITGLADRWVIMGPGY) are interaction with host N-linked glycan. A part of the transmembrane beta-barrel after proteolytic activation of the toxin and insertion into the host membrane region spans residues 257 to 289 (YSLSEKVTTKNKFQWPLVGETELAIEIAASQSW). The tract at residues 347-356 (RWGGNAWYTH) is interaction with glycans from host GPI-anchor. A propeptide spanning residues 445-489 (TRSAKAAQLRSASAEEVALTSVDLDSEALANEGFGNVSLTIVPVQ) is cleaved from the precursor.

This sequence belongs to the aerolysin family. In terms of assembly, homodimer in solution; homoheptamer in the host membrane. After binding to GPI-anchored proteins in target membranes and proteolytic removal of the C-terminal propeptide, the protein assembles into a heptameric pre-pore complex. A further conformation change leads to insertion into the host membrane. Post-translationally, proteolytic cleavage and subsequent release of the propeptide trigger a major conformation change, leading to the formation of a heptameric pre-pore that then inserts into the host membrane.

Its subcellular location is the secreted. It localises to the host cell membrane. Functionally, secreted, cytolytic toxin that forms pores in host membranes after proteolytic removal of a C-terminal propeptide, leading to destruction of the membrane permeability barrier and cell death. The pores are formed by transmembrane beta-strands and are approximately 3 nm in diameter. This chain is Aerolysin (ash3), found in Aeromonas salmonicida.